Consider the following 75-residue polypeptide: Small ribosomal subunit protein bS18 (75 aa).

It belongs to the bacterial ribosomal protein bS18 family. In terms of assembly, part of the 30S ribosomal subunit. Forms a tight heterodimer with protein bS6.

Functionally, binds as a heterodimer with protein bS6 to the central domain of the 16S rRNA, where it helps stabilize the platform of the 30S subunit. This Moorella thermoacetica (strain ATCC 39073 / JCM 9320) protein is Small ribosomal subunit protein bS18.